Here is a 53-residue protein sequence, read N- to C-terminus: UPF0391 membrane protein PC1_0455 (53 aa).

A run of 2 helical transmembrane segments spans residues 4–24 (WGII…GGLA) and 30–47 (AAKI…LSLF).

Belongs to the UPF0391 family.

The protein localises to the cell membrane. The chain is UPF0391 membrane protein PC1_0455 from Pectobacterium carotovorum subsp. carotovorum (strain PC1).